A 122-amino-acid polypeptide reads, in one-letter code: Large ribosomal subunit protein uL14 (122 aa).

It belongs to the universal ribosomal protein uL14 family. In terms of assembly, part of the 50S ribosomal subunit. Forms a cluster with proteins L3 and L19. In the 70S ribosome, L14 and L19 interact and together make contacts with the 16S rRNA in bridges B5 and B8.

Binds to 23S rRNA. Forms part of two intersubunit bridges in the 70S ribosome. The polypeptide is Large ribosomal subunit protein uL14 (Orientia tsutsugamushi (strain Boryong) (Rickettsia tsutsugamushi)).